We begin with the raw amino-acid sequence, 224 residues long: Oxalate oxidase GF-3.8 (224 aa).

The first 23 residues, 1-23 (MGYSKNIASGMFAMLLLASAVLS), serve as a signal peptide directing secretion. A disulfide bridge connects residues Cys-33 and Cys-49. A Cupin type-1 domain is found at 63–214 (SKLAKAGNTS…ALRVEAGVVE (152 aa)). N-linked (GlcNAc...) asparagine glycans are attached at residues Asn-70 and Asn-75. The Mn(2+) site is built by His-111, His-113, Glu-118, and His-160.

This sequence belongs to the germin family. In terms of assembly, oligomer (believed to be a pentamer but probably hexamer).

The protein localises to the secreted. It localises to the extracellular space. The protein resides in the apoplast. It is found in the cytoplasm. Its subcellular location is the cell wall. The enzyme catalyses oxalate + O2 + 2 H(+) = H2O2 + 2 CO2. Its function is as follows. Produces developmental and stress-related release of hydrogen peroxide in the apoplast. May play an important role in several aspects of plant growth and defense mechanisms. This Triticum aestivum (Wheat) protein is Oxalate oxidase GF-3.8.